The following is a 438-amino-acid chain: Na(+)/H(+) antiporter NhaA (438 aa).

The next 11 helical transmembrane spans lie at 23–43 (FGGI…NSFL), 62–82 (FFIG…LFFL), 104–124 (SFPV…YFFL), 133–153 (GFGI…MLLG), 162–182 (VFLI…IALF), 185–205 (TNLK…LAVL), 212–232 (SLIP…QSGI), 302–322 (FLAP…NAGV), 337–357 (LGVI…ITFI), 372–392 (WWHI…SMFI), and 410–430 (IAIL…LFVL).

The protein belongs to the NhaA Na(+)/H(+) (TC 2.A.33) antiporter family.

It is found in the cell inner membrane. It carries out the reaction Na(+)(in) + 2 H(+)(out) = Na(+)(out) + 2 H(+)(in). Its function is as follows. Na(+)/H(+) antiporter that extrudes sodium in exchange for external protons. The protein is Na(+)/H(+) antiporter NhaA of Helicobacter pylori (strain G27).